The primary structure comprises 115 residues: Succinate dehydrogenase assembly factor 3, mitochondrial (115 aa).

It belongs to the complex I LYR family. SDHAF3 subfamily. Interacts with the iron-sulfur protein subunit within the SDH catalytic dimer.

Its subcellular location is the mitochondrion matrix. In terms of biological role, plays an essential role in the assembly of succinate dehydrogenase (SDH), an enzyme complex (also referred to as respiratory complex II) that is a component of both the tricarboxylic acid (TCA) cycle and the mitochondrial electron transport chain, and which couples the oxidation of succinate to fumarate with the reduction of ubiquinone (coenzyme Q) to ubiquinol. Promotes maturation of the iron-sulfur protein subunit of the SDH catalytic dimer, protecting it from the deleterious effects of oxidants. May act together with SDHAF1. This Nematostella vectensis (Starlet sea anemone) protein is Succinate dehydrogenase assembly factor 3, mitochondrial (acn9).